A 413-amino-acid polypeptide reads, in one-letter code: Tryptophan synthase beta chain 2 (413 aa).

Residue lysine 107 is modified to N6-(pyridoxal phosphate)lysine.

The protein belongs to the TrpB family. Tetramer of two alpha and two beta chains. Requires pyridoxal 5'-phosphate as cofactor.

The enzyme catalyses (1S,2R)-1-C-(indol-3-yl)glycerol 3-phosphate + L-serine = D-glyceraldehyde 3-phosphate + L-tryptophan + H2O. It participates in amino-acid biosynthesis; L-tryptophan biosynthesis; L-tryptophan from chorismate: step 5/5. Functionally, the beta subunit is responsible for the synthesis of L-tryptophan from indole and L-serine. The protein is Tryptophan synthase beta chain 2 (trpB2) of Nostoc sp. (strain PCC 7120 / SAG 25.82 / UTEX 2576).